The primary structure comprises 39 residues: Photosystem II reaction center protein J (39 aa).

The helical transmembrane segment at 9–29 (LWLVATVGGIAAITVLGIFIY) threads the bilayer.

The protein belongs to the PsbJ family. As to quaternary structure, PSII is composed of 1 copy each of membrane proteins PsbA, PsbB, PsbC, PsbD, PsbE, PsbF, PsbH, PsbI, PsbJ, PsbK, PsbL, PsbM, PsbT, PsbX, PsbY, PsbZ, Psb30/Ycf12, at least 3 peripheral proteins of the oxygen-evolving complex and a large number of cofactors. It forms dimeric complexes.

It localises to the plastid. It is found in the chloroplast thylakoid membrane. Functionally, one of the components of the core complex of photosystem II (PSII). PSII is a light-driven water:plastoquinone oxidoreductase that uses light energy to abstract electrons from H(2)O, generating O(2) and a proton gradient subsequently used for ATP formation. It consists of a core antenna complex that captures photons, and an electron transfer chain that converts photonic excitation into a charge separation. The polypeptide is Photosystem II reaction center protein J (Pyropia yezoensis (Susabi-nori)).